Reading from the N-terminus, the 355-residue chain is Mu-like prophage FluMu I protein (355 aa).

The protein belongs to the peptidase U35 family.

Functionally, potential protease involved in virion morphogenesis. In Haemophilus influenzae (strain ATCC 51907 / DSM 11121 / KW20 / Rd), this protein is Mu-like prophage FluMu I protein.